The chain runs to 303 residues: ATP synthase gamma chain (303 aa).

Belongs to the ATPase gamma chain family. In terms of assembly, F-type ATPases have 2 components, CF(1) - the catalytic core - and CF(0) - the membrane proton channel. CF(1) has five subunits: alpha(3), beta(3), gamma(1), delta(1), epsilon(1). CF(0) has three main subunits: a, b and c.

It is found in the cell inner membrane. Its function is as follows. Produces ATP from ADP in the presence of a proton gradient across the membrane. The gamma chain is believed to be important in regulating ATPase activity and the flow of protons through the CF(0) complex. This chain is ATP synthase gamma chain, found in Elusimicrobium minutum (strain Pei191).